We begin with the raw amino-acid sequence, 216 residues long: Pyridoxine/pyridoxamine 5'-phosphate oxidase 1 (216 aa).

Substrate-binding positions include 10–13 (RREY) and K68. FMN contacts are provided by residues 63–68 (RIVLLK), 78–79 (YT), K85, and Q107. The substrate site is built by Y125, R129, and S133. Residues 142–143 (QS) and W186 each bind FMN. 192-194 (RLH) is a substrate binding site. R196 is a binding site for FMN.

This sequence belongs to the pyridoxamine 5'-phosphate oxidase family. Homodimer. FMN serves as cofactor.

It catalyses the reaction pyridoxamine 5'-phosphate + O2 + H2O = pyridoxal 5'-phosphate + H2O2 + NH4(+). The catalysed reaction is pyridoxine 5'-phosphate + O2 = pyridoxal 5'-phosphate + H2O2. It functions in the pathway cofactor metabolism; pyridoxal 5'-phosphate salvage; pyridoxal 5'-phosphate from pyridoxamine 5'-phosphate: step 1/1. It participates in cofactor metabolism; pyridoxal 5'-phosphate salvage; pyridoxal 5'-phosphate from pyridoxine 5'-phosphate: step 1/1. Catalyzes the oxidation of either pyridoxine 5'-phosphate (PNP) or pyridoxamine 5'-phosphate (PMP) into pyridoxal 5'-phosphate (PLP). In Hydrogenovibrio crunogenus (strain DSM 25203 / XCL-2) (Thiomicrospira crunogena), this protein is Pyridoxine/pyridoxamine 5'-phosphate oxidase 1.